Reading from the N-terminus, the 69-residue chain is Protein transport protein Sec61 subunit gamma-3 (69 aa).

Met1 is subject to N-acetylmethionine. Over 1–32 (MEAIDSAIDPLRDFAKSSVRLVQRCHKPDRKE) the chain is Cytoplasmic. The helical transmembrane segment at 33–61 (FTKVAVRTAIGFVVMGFVGFFVKLVFIPI) threads the bilayer. The Extracellular segment spans residues 62 to 69 (NNIIVGSS).

This sequence belongs to the SecE/SEC61-gamma family. Heterotrimeric complex composed of SEC61-alpha, SEC61-beta and SEC61-gamma.

The protein localises to the endoplasmic reticulum membrane. Functionally, necessary for protein translocation in the endoplasmic reticulum. The sequence is that of Protein transport protein Sec61 subunit gamma-3 (SEC61G3) from Arabidopsis thaliana (Mouse-ear cress).